A 366-amino-acid polypeptide reads, in one-letter code: Aliphatic nitrilase (366 aa).

Positions Phe-8–Leu-282 constitute a CN hydrolase domain. Glu-48 functions as the Proton acceptor in the catalytic mechanism. The active-site Proton donor is the Lys-131. Cys-165 serves as the catalytic Nucleophile. Residues Asp-346–Ile-366 are disordered. Residues His-355–Ile-366 show a composition bias toward basic and acidic residues.

This sequence belongs to the carbon-nitrogen hydrolase superfamily. Nitrilase family. In terms of assembly, homodimer.

The catalysed reaction is an aliphatic nitrile + 2 H2O = a carboxylate + NH4(+). The protein is Aliphatic nitrilase (nitA) of Rhodococcus rhodochrous.